The following is a 621-amino-acid chain: Transmembrane protein 200C (621 aa).

Residues 12–37 (ARKQDPLRPPSQIPKRKRKAKKRRKN) are disordered. A compositionally biased stretch (basic residues) spans 25–36 (PKRKRKAKKRRK). Residues 53-73 (GLIALCGILVLLVGIAMAVVG) traverse the membrane as a helical segment. The disordered stretch occupies residues 80–147 (GTNREGGKQL…RAASPSSSST (68 aa)). Residues 125–147 (SSSAGAPRSTPPARAASPSSSST) show a composition bias toward low complexity. Residues 167–187 (VFGPLIMGIGIFLFICANAVL) form a helical membrane-spanning segment. Disordered regions lie at residues 284–315 (WPPH…PREP), 347–368 (ASSC…QSTA), and 384–598 (LQGG…FTNK). Residues 290 to 303 (APSGGRPRGAASPP) show a composition bias toward low complexity. A compositionally biased stretch (basic and acidic residues) spans 405–418 (PGERGSQEIPRGEL). The segment covering 479-490 (RAPPSPEPPPSP) has biased composition (pro residues). Low complexity-rich tracts occupy residues 491-505 (GSAD…KAAS) and 523-533 (GSSQSDDPSSS). The segment covering 586–595 (EQPQPVQRQF) has biased composition (polar residues).

This sequence belongs to the TMEM200 family.

It is found in the membrane. The sequence is that of Transmembrane protein 200C (TMEM200C) from Homo sapiens (Human).